The following is a 312-amino-acid chain: Methionyl-tRNA formyltransferase (312 aa).

111 to 114 serves as a coordination point for (6S)-5,6,7,8-tetrahydrofolate; sequence SLLP.

The protein belongs to the Fmt family.

The enzyme catalyses L-methionyl-tRNA(fMet) + (6R)-10-formyltetrahydrofolate = N-formyl-L-methionyl-tRNA(fMet) + (6S)-5,6,7,8-tetrahydrofolate + H(+). In terms of biological role, attaches a formyl group to the free amino group of methionyl-tRNA(fMet). The formyl group appears to play a dual role in the initiator identity of N-formylmethionyl-tRNA by promoting its recognition by IF2 and preventing the misappropriation of this tRNA by the elongation apparatus. In Rhodopseudomonas palustris (strain HaA2), this protein is Methionyl-tRNA formyltransferase.